The following is a 273-amino-acid chain: Large ribosomal subunit protein uL2 (273 aa).

The segment at 224 to 264 (AMNPVDHPHGGGEGRNFGKHPVTPWGIQTKGKKTRKNKRTD) is disordered. Over residues 253–264 (KGKKTRKNKRTD) the composition is skewed to basic residues.

This sequence belongs to the universal ribosomal protein uL2 family. As to quaternary structure, part of the 50S ribosomal subunit. Forms a bridge to the 30S subunit in the 70S ribosome.

Its function is as follows. One of the primary rRNA binding proteins. Required for association of the 30S and 50S subunits to form the 70S ribosome, for tRNA binding and peptide bond formation. It has been suggested to have peptidyltransferase activity; this is somewhat controversial. Makes several contacts with the 16S rRNA in the 70S ribosome. The protein is Large ribosomal subunit protein uL2 of Buchnera aphidicola subsp. Acyrthosiphon pisum (strain 5A).